Here is a 293-residue protein sequence, read N- to C-terminus: Elongation factor Ts (293 aa).

Residues T80–V83 are involved in Mg(2+) ion dislocation from EF-Tu.

Belongs to the EF-Ts family.

It localises to the cytoplasm. Functionally, associates with the EF-Tu.GDP complex and induces the exchange of GDP to GTP. It remains bound to the aminoacyl-tRNA.EF-Tu.GTP complex up to the GTP hydrolysis stage on the ribosome. The sequence is that of Elongation factor Ts from Paraburkholderia phymatum (strain DSM 17167 / CIP 108236 / LMG 21445 / STM815) (Burkholderia phymatum).